We begin with the raw amino-acid sequence, 503 residues long: Cytochrome P450 71B6 (503 aa).

A helical transmembrane segment spans residues 10-30; the sequence is TELLPWLLLLLIPPLLIFFLL. Cys446 is a heme binding site.

It belongs to the cytochrome P450 family. Heme is required as a cofactor.

The protein resides in the membrane. The sequence is that of Cytochrome P450 71B6 (CYP71B6) from Arabidopsis thaliana (Mouse-ear cress).